The sequence spans 281 residues: NADPH-dependent 7-cyano-7-deazaguanine reductase (281 aa).

81 to 83 is a substrate binding site; the sequence is VES. 83–84 provides a ligand contact to NADPH; sequence SK. The active-site Thioimide intermediate is the cysteine 188. Aspartate 195 functions as the Proton donor in the catalytic mechanism. 227–228 lines the substrate pocket; that stretch reads HE. 256–257 lines the NADPH pocket; the sequence is RG. The interval 261 to 281 is disordered; it reads INPLRTSHPQGLPRNMRTARQ.

The protein belongs to the GTP cyclohydrolase I family. QueF type 2 subfamily. In terms of assembly, homodimer.

Its subcellular location is the cytoplasm. It carries out the reaction 7-aminomethyl-7-carbaguanine + 2 NADP(+) = 7-cyano-7-deazaguanine + 2 NADPH + 3 H(+). The protein operates within tRNA modification; tRNA-queuosine biosynthesis. Its function is as follows. Catalyzes the NADPH-dependent reduction of 7-cyano-7-deazaguanine (preQ0) to 7-aminomethyl-7-deazaguanine (preQ1). This chain is NADPH-dependent 7-cyano-7-deazaguanine reductase, found in Verminephrobacter eiseniae (strain EF01-2).